The primary structure comprises 281 residues: Homeobox protein Hox-A5 (281 aa).

Disordered regions lie at residues 65 to 144 and 162 to 183; these read VGNE…PCSS and PLEE…SDST. Composition is skewed to polar residues over residues 68–99 and 114–127; these read ERTQ…STGT and VASS…QSQH. Residues 132–144 are compositionally biased toward low complexity; sequence NSITTPCSTPCSS. Polar residues predominate over residues 172 to 183; sequence APTTPQNVSDST. Positions 187–192 match the Antp-type hexapeptide motif; sequence IYPWMR. The homeobox DNA-binding region spans 205 to 264; it reads GKRARTAYTRYQTLELEKEFHFNRYLTRRRRIEIAHALCLSERQIKIWFQNRRMKWKKDN.

It belongs to the Antp homeobox family.

It localises to the nucleus. Functionally, sequence-specific transcription factor which is part of a developmental regulatory system that provides cells with specific positional identities on the anterior-posterior axis. This chain is Homeobox protein Hox-A5 (hoxa5), found in Morone saxatilis (Striped bass).